A 149-amino-acid chain; its full sequence is MKVILLRDVPKIGKKGEIKEVSDGYARNYLIPRGFAKEYTEGLERAIKHEKEIEKRKKEREREESEKILKELKKRTHVVKVKAGEGGKIFGAVTAATLAEEISKTTGLKLDKRWFKLDKPIKELGEYSLEVNLPGGVKDTIKIKVEREE.

The protein belongs to the bacterial ribosomal protein bL9 family.

Binds to the 23S rRNA. This is Large ribosomal subunit protein bL9 from Thermotoga petrophila (strain ATCC BAA-488 / DSM 13995 / JCM 10881 / RKU-1).